The sequence spans 110 residues: UPF0060 membrane protein Veis_0342 (110 aa).

A run of 4 helical transmembrane segments spans residues valine 8 to isoleucine 28, proline 33 to leucine 53, alanine 63 to valine 83, and valine 90 to alanine 110.

This sequence belongs to the UPF0060 family.

The protein localises to the cell inner membrane. This Verminephrobacter eiseniae (strain EF01-2) protein is UPF0060 membrane protein Veis_0342.